The chain runs to 389 residues: Chalcone synthase 9 (389 aa).

Cys-164 is an active-site residue.

It belongs to the thiolase-like superfamily. Chalcone/stilbene synthases family.

It catalyses the reaction (E)-4-coumaroyl-CoA + 3 malonyl-CoA + 3 H(+) = 2',4,4',6'-tetrahydroxychalcone + 3 CO2 + 4 CoA. It participates in secondary metabolite biosynthesis; flavonoid biosynthesis. Functionally, the primary product of this enzyme is 4,2',4',6'-tetrahydroxychalcone (also termed naringenin-chalcone or chalcone) which can under specific conditions spontaneously isomerize into naringenin. This chain is Chalcone synthase 9 (CHS9), found in Daucus carota (Wild carrot).